The chain runs to 375 residues: MQCALYDAGRCRSCQWITQPIPEQLSAKTADLKNLLADFPVEEWCAPVSGPEQGFRNKAKMVVSGSVEKPLLGMLHRDGTPEDLCDCPLYPASFAPVFAALKPFIARAGLTPYNVARKRGELKYILLTESQSDGGMMLRFVLRSDTKLAQLRKALPWLQEQLPQLKVITVNIQPVHMAIMEGETEIYLTEQQALAERFNDVPLWIRPQSFFQTNPAVASQLYATARDWVRQLPVKHMWDLFCGVGGFGLHCATPDMQLTGIEIAPEAIACAKQSAAELGLTRLQFQALDSTQFATAQGEVPELVLVNPPRRGIGKPLCDYLSTMAPRFIIYSSCNAQTMAKDIRELPGYRIERVQLFDMFPHTAHYEVLTLLVQQ.

[4Fe-4S] cluster contacts are provided by cysteine 3, cysteine 11, cysteine 14, and cysteine 87. S-adenosyl-L-methionine contacts are provided by glutamine 212, phenylalanine 241, glutamate 262, and asparagine 307. Cysteine 334 (nucleophile) is an active-site residue.

The protein belongs to the class I-like SAM-binding methyltransferase superfamily. RNA M5U methyltransferase family. RlmC subfamily.

The enzyme catalyses uridine(747) in 23S rRNA + S-adenosyl-L-methionine = 5-methyluridine(747) in 23S rRNA + S-adenosyl-L-homocysteine + H(+). Functionally, catalyzes the formation of 5-methyl-uridine at position 747 (m5U747) in 23S rRNA. This chain is 23S rRNA (uracil(747)-C(5))-methyltransferase RlmC, found in Escherichia coli O6:H1 (strain CFT073 / ATCC 700928 / UPEC).